We begin with the raw amino-acid sequence, 262 residues long: Acyl-[acyl-carrier-protein]--UDP-N-acetylglucosamine O-acyltransferase (262 aa).

It belongs to the transferase hexapeptide repeat family. LpxA subfamily. Homotrimer.

The protein resides in the cytoplasm. The enzyme catalyses a (3R)-hydroxyacyl-[ACP] + UDP-N-acetyl-alpha-D-glucosamine = a UDP-3-O-[(3R)-3-hydroxyacyl]-N-acetyl-alpha-D-glucosamine + holo-[ACP]. It functions in the pathway glycolipid biosynthesis; lipid IV(A) biosynthesis; lipid IV(A) from (3R)-3-hydroxytetradecanoyl-[acyl-carrier-protein] and UDP-N-acetyl-alpha-D-glucosamine: step 1/6. Involved in the biosynthesis of lipid A, a phosphorylated glycolipid that anchors the lipopolysaccharide to the outer membrane of the cell. The protein is Acyl-[acyl-carrier-protein]--UDP-N-acetylglucosamine O-acyltransferase of Erwinia tasmaniensis (strain DSM 17950 / CFBP 7177 / CIP 109463 / NCPPB 4357 / Et1/99).